Reading from the N-terminus, the 335-residue chain is Holliday junction branch migration complex subunit RuvB (335 aa).

Residues 4–184 form a large ATPase domain (RuvB-L) region; it reads ADRIISSNAQ…FGIVQRLEFY (181 aa). Residues Ile23, Arg24, Gly65, Lys68, Thr69, Thr70, 131 to 133, Arg174, Tyr184, and Arg221 each bind ATP; that span reads EDY. Residue Thr69 participates in Mg(2+) binding. Residues 185–255 are small ATPAse domain (RuvB-S); that stretch reads SVEDLTSIVA…IAKSALSMLD (71 aa). The head domain (RuvB-H) stretch occupies residues 258–335; that stretch reads QAGFDYLDRK…RHFGLDKLTE (78 aa). DNA contacts are provided by Arg294, Arg313, and Arg318.

This sequence belongs to the RuvB family. In terms of assembly, homohexamer. Forms an RuvA(8)-RuvB(12)-Holliday junction (HJ) complex. HJ DNA is sandwiched between 2 RuvA tetramers; dsDNA enters through RuvA and exits via RuvB. An RuvB hexamer assembles on each DNA strand where it exits the tetramer. Each RuvB hexamer is contacted by two RuvA subunits (via domain III) on 2 adjacent RuvB subunits; this complex drives branch migration. In the full resolvosome a probable DNA-RuvA(4)-RuvB(12)-RuvC(2) complex forms which resolves the HJ.

Its subcellular location is the cytoplasm. It catalyses the reaction ATP + H2O = ADP + phosphate + H(+). Its function is as follows. The RuvA-RuvB-RuvC complex processes Holliday junction (HJ) DNA during genetic recombination and DNA repair, while the RuvA-RuvB complex plays an important role in the rescue of blocked DNA replication forks via replication fork reversal (RFR). RuvA specifically binds to HJ cruciform DNA, conferring on it an open structure. The RuvB hexamer acts as an ATP-dependent pump, pulling dsDNA into and through the RuvAB complex. RuvB forms 2 homohexamers on either side of HJ DNA bound by 1 or 2 RuvA tetramers; 4 subunits per hexamer contact DNA at a time. Coordinated motions by a converter formed by DNA-disengaged RuvB subunits stimulates ATP hydrolysis and nucleotide exchange. Immobilization of the converter enables RuvB to convert the ATP-contained energy into a lever motion, pulling 2 nucleotides of DNA out of the RuvA tetramer per ATP hydrolyzed, thus driving DNA branch migration. The RuvB motors rotate together with the DNA substrate, which together with the progressing nucleotide cycle form the mechanistic basis for DNA recombination by continuous HJ branch migration. Branch migration allows RuvC to scan DNA until it finds its consensus sequence, where it cleaves and resolves cruciform DNA. This chain is Holliday junction branch migration complex subunit RuvB, found in Mannheimia succiniciproducens (strain KCTC 0769BP / MBEL55E).